We begin with the raw amino-acid sequence, 266 residues long: Vitamin B12-binding protein (266 aa).

The first 22 residues, 1–22 (MAKSLFRALVALSFLAPLWLNA), serve as a signal peptide directing secretion. A Fe/B12 periplasmic-binding domain is found at 25–266 (RVITLSPANT…QLCNALSQVD (242 aa)). Cyanocob(III)alamin contacts are provided by residues Tyr50 and 242 to 246 (DWFER). Cys183 and Cys259 are oxidised to a cystine.

The protein belongs to the BtuF family. The complex is composed of two ATP-binding proteins (BtuD), two transmembrane proteins (BtuC) and a solute-binding protein (BtuF).

The protein localises to the periplasm. In terms of biological role, part of the ABC transporter complex BtuCDF involved in vitamin B12 import. Binds vitamin B12 and delivers it to the periplasmic surface of BtuC. This Escherichia coli O6:H1 (strain CFT073 / ATCC 700928 / UPEC) protein is Vitamin B12-binding protein.